A 225-amino-acid polypeptide reads, in one-letter code: Endonuclease V (225 aa).

2 residues coordinate Mg(2+): Asp43 and Asp110.

It belongs to the endonuclease V family. Mg(2+) is required as a cofactor.

The protein resides in the cytoplasm. The catalysed reaction is Endonucleolytic cleavage at apurinic or apyrimidinic sites to products with a 5'-phosphate.. Its function is as follows. DNA repair enzyme involved in the repair of deaminated bases. Selectively cleaves double-stranded DNA at the second phosphodiester bond 3' to a deoxyinosine leaving behind the intact lesion on the nicked DNA. The polypeptide is Endonuclease V (Thermotoga sp. (strain RQ2)).